A 114-amino-acid polypeptide reads, in one-letter code: Flagellar hook-basal body complex protein FliE (114 aa).

Belongs to the FliE family.

It is found in the bacterial flagellum basal body. In Burkholderia lata (strain ATCC 17760 / DSM 23089 / LMG 22485 / NCIMB 9086 / R18194 / 383), this protein is Flagellar hook-basal body complex protein FliE.